Here is an 820-residue protein sequence, read N- to C-terminus: Phosphoenolpyruvate synthase (820 aa).

His-438 acts as the Tele-phosphohistidine intermediate in catalysis. Residues Arg-539, Arg-587, Glu-689, Gly-710, Ser-711, Asn-712, and Asp-713 each contribute to the substrate site. Glu-689 is a binding site for Mg(2+). A Mg(2+)-binding site is contributed by Asp-713. The active-site Proton donor is Cys-762.

Belongs to the PEP-utilizing enzyme family. Requires Mg(2+) as cofactor.

The catalysed reaction is pyruvate + ATP + H2O = phosphoenolpyruvate + AMP + phosphate + 2 H(+). Its pathway is carbohydrate biosynthesis; gluconeogenesis. In terms of biological role, catalyzes the phosphorylation of pyruvate to phosphoenolpyruvate. This chain is Phosphoenolpyruvate synthase (ppsA), found in Aeropyrum pernix (strain ATCC 700893 / DSM 11879 / JCM 9820 / NBRC 100138 / K1).